The primary structure comprises 206 residues: Ran-specific GTPase-activating protein (206 aa).

Positions 1–26 are enriched in basic and acidic residues; sequence MAAAKDTHEDHDTSTENADESNHDPQ. The segment at 1 to 33 is disordered; sequence MAAAKDTHEDHDTSTENADESNHDPQFEPIVSL. At Ala-2 the chain carries N-acetylalanine. Thr-13 is modified (phosphothreonine). Phosphoserine occurs at positions 21 and 60. The 139-residue stretch at 26–164 folds into the RanBD1 domain; it reads QFEPIVSLPE…FEECRKEIEE (139 aa). Position 150 is an N6-acetyllysine; alternate (Lys-150). Lys-150 carries the post-translational modification N6-succinyllysine; alternate. Positions 162 to 184 are enriched in basic and acidic residues; the sequence is IEEKEKKGSGKNDSTEKVVEKLE. The interval 162–206 is disordered; that stretch reads IEEKEKKGSGKNDSTEKVVEKLEALSVQEGEQPQDAAPAAVEEEQ. The residue at position 182 (Lys-182) is an N6-acetyllysine. Ser-187 carries the post-translational modification Phosphoserine.

This sequence belongs to the RANBP1 family. In terms of assembly, interacts with RAN (via C-terminus of GTP-bound form) but not with GDP-bound RAN. Identified in a complex composed of RAN, RANGAP1 and RANBP1. Identified in a complex that contains TNPO1, RAN and RANBP1. Identified in a complex that contains CSE1L, KPNA2, RAN and RANBP1. Identified in a complex with nucleotide-free RAN and RCC1.

Its function is as follows. Plays a role in RAN-dependent nucleocytoplasmic transport. Alleviates the TNPO1-dependent inhibition of RAN GTPase activity and mediates the dissociation of RAN from proteins involved in transport into the nucleus. Induces a conformation change in the complex formed by XPO1 and RAN that triggers the release of the nuclear export signal of cargo proteins. Promotes the disassembly of the complex formed by RAN and importin beta. Promotes dissociation of RAN from a complex with KPNA2 and CSE1L. Required for normal mitotic spindle assembly and normal progress through mitosis via its effect on RAN. Does not increase the RAN GTPase activity by itself, but increases GTP hydrolysis mediated by RANGAP1. Inhibits RCC1-dependent exchange of RAN-bound GDP by GTP. The protein is Ran-specific GTPase-activating protein (RANBP1) of Bos taurus (Bovine).